We begin with the raw amino-acid sequence, 420 residues long: Histidine--tRNA ligase (420 aa).

It belongs to the class-II aminoacyl-tRNA synthetase family. Homodimer.

The protein localises to the cytoplasm. The enzyme catalyses tRNA(His) + L-histidine + ATP = L-histidyl-tRNA(His) + AMP + diphosphate + H(+). The chain is Histidine--tRNA ligase from Acholeplasma laidlawii (strain PG-8A).